A 1077-amino-acid chain; its full sequence is Endo-1,4-beta-xylanase Y (1077 aa).

The signal sequence occupies residues 1–26 (MKNKRVLAKITALVVLLGVFFVLPSN). The 148-residue stretch at 33–180 (DYEVVHDTFE…IFDDVTITRK (148 aa)) folds into the CBM-cenC 1 domain. The region spanning 189 to 538 (YAANAVLKDM…KPAYNAVASI (350 aa)) is the GH10 domain. The Proton donor role is filled by glutamate 337. Glutamate 460 (nucleophile) is an active-site residue. The disordered stretch occupies residues 543 to 563 (EWGDGNNPAGGGGGGKPEEPD). One can recognise a CBM-cenC 2 domain in the interval 565–714 (NGYYYHDTFE…YIDEAIGAVA (150 aa)). The region spanning 728–796 (PPVLLGDVNG…LLRVIDKFPV (69 aa)) is the Dockerin domain.

The protein belongs to the glycosyl hydrolase 10 (cellulase F) family.

The catalysed reaction is Endohydrolysis of (1-&gt;4)-beta-D-xylosidic linkages in xylans.. This chain is Endo-1,4-beta-xylanase Y (xynY), found in Acetivibrio thermocellus (Hungateiclostridium thermocellum).